The sequence spans 404 residues: Cysteine desulfurase IscS (404 aa).

Residues 75-76, N155, Q183, and 203-205 contribute to the pyridoxal 5'-phosphate site; these read AT and SAH. The residue at position 206 (K206) is an N6-(pyridoxal phosphate)lysine. Position 243 (T243) interacts with pyridoxal 5'-phosphate. C328 functions as the Cysteine persulfide intermediate in the catalytic mechanism. C328 serves as a coordination point for [2Fe-2S] cluster.

This sequence belongs to the class-V pyridoxal-phosphate-dependent aminotransferase family. NifS/IscS subfamily. As to quaternary structure, homodimer. Forms a heterotetramer with IscU, interacts with other sulfur acceptors. Pyridoxal 5'-phosphate is required as a cofactor.

The protein resides in the cytoplasm. The enzyme catalyses (sulfur carrier)-H + L-cysteine = (sulfur carrier)-SH + L-alanine. It participates in cofactor biosynthesis; iron-sulfur cluster biosynthesis. In terms of biological role, master enzyme that delivers sulfur to a number of partners involved in Fe-S cluster assembly, tRNA modification or cofactor biosynthesis. Catalyzes the removal of elemental sulfur atoms from cysteine to produce alanine. Functions as a sulfur delivery protein for Fe-S cluster synthesis onto IscU, an Fe-S scaffold assembly protein, as well as other S acceptor proteins. The sequence is that of Cysteine desulfurase IscS from Buchnera aphidicola subsp. Acyrthosiphon pisum (strain 5A).